We begin with the raw amino-acid sequence, 905 residues long: Catenin alpha-2 (905 aa).

A Phosphothreonine modification is found at threonine 632. Residues serine 640, serine 651, and serine 853 each carry the phosphoserine modification. Basic and acidic residues predominate over residues valine 869–threonine 879. Positions valine 869–serine 891 are disordered. A compositionally biased stretch (basic residues) spans arginine 880–isoleucine 890. Serine 891 carries the post-translational modification Phosphoserine.

Belongs to the vinculin/alpha-catenin family. As to quaternary structure, interacts with CDH1 and CDH2. Interacts with ZNF639; recruits CTNNA2 to the nucleus. Interacts with F-actin.

The protein resides in the cell membrane. It localises to the cytoplasm. Its subcellular location is the cytoskeleton. It is found in the cell junction. The protein localises to the adherens junction. The protein resides in the cell projection. It localises to the axon. Its subcellular location is the nucleus. May function as a linker between cadherin adhesion receptors and the cytoskeleton to regulate cell-cell adhesion and differentiation in the nervous system. Required for proper regulation of cortical neuronal migration and neurite growth. It acts as a negative regulator of Arp2/3 complex activity and Arp2/3-mediated actin polymerization. It thereby suppresses excessive actin branching which would impair neurite growth and stability. Regulates morphological plasticity of synapses and cerebellar and hippocampal lamination during development. Functions in the control of startle modulation. This is Catenin alpha-2 (CTNNA2) from Pongo abelii (Sumatran orangutan).